A 638-amino-acid polypeptide reads, in one-letter code: 2-isopropylmalate synthase (638 aa).

Positions 72–346 constitute a Pyruvate carboxyltransferase domain; sequence PRWCSVDLRD…DPQLDLSNVP (275 aa). Mg(2+)-binding residues include aspartate 81, histidine 285, histidine 287, and asparagine 321. The regulatory domain stretch occupies residues 488-638; sequence VEQSGMTAAG…SAINRSQRQR (151 aa).

This sequence belongs to the alpha-IPM synthase/homocitrate synthase family. LeuA type 2 subfamily. Homodimer. Requires Mg(2+) as cofactor.

It localises to the cytoplasm. The enzyme catalyses 3-methyl-2-oxobutanoate + acetyl-CoA + H2O = (2S)-2-isopropylmalate + CoA + H(+). Its pathway is amino-acid biosynthesis; L-leucine biosynthesis; L-leucine from 3-methyl-2-oxobutanoate: step 1/4. Functionally, catalyzes the condensation of the acetyl group of acetyl-CoA with 3-methyl-2-oxobutanoate (2-ketoisovalerate) to form 3-carboxy-3-hydroxy-4-methylpentanoate (2-isopropylmalate). This is 2-isopropylmalate synthase from Bifidobacterium longum subsp. infantis (strain ATCC 15697 / DSM 20088 / JCM 1222 / NCTC 11817 / S12).